The following is a 328-amino-acid chain: DNA repair and recombination protein RadA (328 aa).

118-125 (GEYGSGKT) serves as a coordination point for ATP.

This sequence belongs to the eukaryotic RecA-like protein family.

Its function is as follows. Involved in DNA repair and in homologous recombination. Binds and assemble on single-stranded DNA to form a nucleoprotein filament. Hydrolyzes ATP in a ssDNA-dependent manner and promotes DNA strand exchange between homologous DNA molecules. This Desulfurococcus amylolyticus (strain DSM 18924 / JCM 16383 / VKM B-2413 / 1221n) (Desulfurococcus kamchatkensis) protein is DNA repair and recombination protein RadA.